Consider the following 323-residue polypeptide: tRNA U34 carboxymethyltransferase (323 aa).

Carboxy-S-adenosyl-L-methionine is bound by residues lysine 91, tryptophan 105, lysine 110, glycine 130, 152-154, 181-182, methionine 196, tyrosine 200, and arginine 315; these read DPT and IE.

This sequence belongs to the class I-like SAM-binding methyltransferase superfamily. CmoB family. Homotetramer.

The enzyme catalyses carboxy-S-adenosyl-L-methionine + 5-hydroxyuridine(34) in tRNA = 5-carboxymethoxyuridine(34) in tRNA + S-adenosyl-L-homocysteine + H(+). Functionally, catalyzes carboxymethyl transfer from carboxy-S-adenosyl-L-methionine (Cx-SAM) to 5-hydroxyuridine (ho5U) to form 5-carboxymethoxyuridine (cmo5U) at position 34 in tRNAs. This is tRNA U34 carboxymethyltransferase from Salmonella agona (strain SL483).